The following is an 87-amino-acid chain: Glutaredoxin (87 aa).

The Glutaredoxin domain occupies 1–87 (MFKVYGYDSN…GFDQLREYFK (87 aa)). Residues Cys-14 and Cys-17 are joined by a disulfide bond.

This sequence belongs to the glutaredoxin family.

Functionally, serves as a reducing agent for the phage-induced ribonucleotide reductase, but not for the bacterial ones. This specificity may be the result of sequence differences around the redox-active disulfide bond. The oxidized form accepts electrons from bacterial glutathione and will, in turn, reduce other small disulfides. Can also be reduced by NADPH and by bacterial thioredoxin reductase. The chain is Glutaredoxin (NRDC) from Enterobacteria phage T4 (Bacteriophage T4).